The chain runs to 263 residues: Hydroxyacylglutathione hydrolase (263 aa).

Residues histidine 55, histidine 57, aspartate 59, histidine 60, histidine 117, aspartate 134, and histidine 172 each contribute to the Zn(2+) site.

Belongs to the metallo-beta-lactamase superfamily. Glyoxalase II family. As to quaternary structure, monomer. Zn(2+) serves as cofactor.

The catalysed reaction is an S-(2-hydroxyacyl)glutathione + H2O = a 2-hydroxy carboxylate + glutathione + H(+). Its pathway is secondary metabolite metabolism; methylglyoxal degradation; (R)-lactate from methylglyoxal: step 2/2. Functionally, thiolesterase that catalyzes the hydrolysis of S-D-lactoyl-glutathione to form glutathione and D-lactic acid. In Shewanella baltica (strain OS155 / ATCC BAA-1091), this protein is Hydroxyacylglutathione hydrolase.